We begin with the raw amino-acid sequence, 150 residues long: Cell division protein SepF (150 aa).

It belongs to the SepF family. As to quaternary structure, homodimer. Interacts with FtsZ.

Its subcellular location is the cytoplasm. In terms of biological role, cell division protein that is part of the divisome complex and is recruited early to the Z-ring. Probably stimulates Z-ring formation, perhaps through the cross-linking of FtsZ protofilaments. Its function overlaps with FtsA. The protein is Cell division protein SepF of Clostridium kluyveri (strain NBRC 12016).